The following is a 41-amino-acid chain: uncharacterized protein (41 aa).

A helical transmembrane segment spans residues 8 to 28; it reads IKKIAMFFLGILVGVFIVLFF.

It is found in the membrane. This is an uncharacterized protein from Streptococcus pneumoniae serotype 2 (strain D39 / NCTC 7466).